A 705-amino-acid polypeptide reads, in one-letter code: uncharacterized protein (705 aa).

Catalysis depends on charge relay system residues S554 and H676.

It belongs to the peptidase S9A family.

This is an uncharacterized protein from Sinorhizobium fredii (strain NBRC 101917 / NGR234).